Here is a 314-residue protein sequence, read N- to C-terminus: tRNA uridine(34) hydroxylase (314 aa).

Positions 140–234 (ARDDVILIDT…YLEETPPDES (95 aa)) constitute a Rhodanese domain. The active-site Cysteine persulfide intermediate is Cys-194.

It belongs to the TrhO family.

The enzyme catalyses uridine(34) in tRNA + AH2 + O2 = 5-hydroxyuridine(34) in tRNA + A + H2O. Its function is as follows. Catalyzes oxygen-dependent 5-hydroxyuridine (ho5U) modification at position 34 in tRNAs. This chain is tRNA uridine(34) hydroxylase, found in Acinetobacter baumannii (strain SDF).